Reading from the N-terminus, the 123-residue chain is UPF0102 protein Csal_2201 (123 aa).

It belongs to the UPF0102 family.

In Chromohalobacter salexigens (strain ATCC BAA-138 / DSM 3043 / CIP 106854 / NCIMB 13768 / 1H11), this protein is UPF0102 protein Csal_2201.